Consider the following 219-residue polypeptide: GTP-binding protein Rit1 (219 aa).

Residues 28–35 (GAGGVGKS), 75–79 (DTAGQ), and 134–137 (NKSD) contribute to the GTP site.

This sequence belongs to the small GTPase superfamily. Ras family. Interacts with AFDN, the C-terminal domain of RALGDS and RLF, but not with RIN1 and PIK3CA. RLF binds exclusively to the active GTP-bound form. Strongly interacts with BRAF, but only weakly with RAF1. BARF and RAF1 association is dependent upon the GTP-bound state. Interacts with RGL3. In terms of tissue distribution, expressed in many tissues.

It localises to the cell membrane. It catalyses the reaction GTP + H2O = GDP + phosphate + H(+). Alternates between an inactive form bound to GDP and an active form bound to GTP. Its function is as follows. Plays a crucial role in coupling NGF stimulation to the activation of both EPHB2 and MAPK14 signaling pathways and in NGF-dependent neuronal differentiation. Involved in ELK1 transactivation through the Ras-MAPK signaling cascade that mediates a wide variety of cellular functions, including cell proliferation, survival, and differentiation. The polypeptide is GTP-binding protein Rit1 (Rit1) (Mus musculus (Mouse)).